A 276-amino-acid chain; its full sequence is Putative hydroxypyruvate isomerase (276 aa).

Residues Glu150 and Glu249 each act as proton donor/acceptor in the active site.

This sequence belongs to the hyi family.

The enzyme catalyses 3-hydroxypyruvate = 2-hydroxy-3-oxopropanoate. Catalyzes the reversible isomerization between hydroxypyruvate and 2-hydroxy-3-oxopropanoate (also termed tartronate semialdehyde). The protein is Putative hydroxypyruvate isomerase (hyi) of Danio rerio (Zebrafish).